The sequence spans 206 residues: GTP cyclohydrolase 1 (206 aa).

Residues C97, H100, and C168 each coordinate Zn(2+).

The protein belongs to the GTP cyclohydrolase I family. As to quaternary structure, toroid-shaped homodecamer, composed of two pentamers of five dimers.

It catalyses the reaction GTP + H2O = 7,8-dihydroneopterin 3'-triphosphate + formate + H(+). Its pathway is cofactor biosynthesis; 7,8-dihydroneopterin triphosphate biosynthesis; 7,8-dihydroneopterin triphosphate from GTP: step 1/1. The polypeptide is GTP cyclohydrolase 1 (Chromobacterium violaceum (strain ATCC 12472 / DSM 30191 / JCM 1249 / CCUG 213 / NBRC 12614 / NCIMB 9131 / NCTC 9757 / MK)).